A 332-amino-acid polypeptide reads, in one-letter code: Glyceraldehyde-3-phosphate dehydrogenase 3 (332 aa).

NAD(+) contacts are provided by R11, I12, and D33. Residues K46 and K63 each participate in a glycyl lysine isopeptide (Lys-Gly) (interchain with G-Cter in ubiquitin) cross-link. Residue T120 participates in NAD(+) binding. A D-glyceraldehyde 3-phosphate-binding site is contributed by 149–151 (SCT). C150 functions as the Nucleophile in the catalytic mechanism. A cysteine persulfide mark is found at C150 and C154. K160 is covalently cross-linked (Glycyl lysine isopeptide (Lys-Gly) (interchain with G-Cter in URM1)). Residues T180, 209-210 (TG), and R232 each bind D-glyceraldehyde 3-phosphate. S302 carries the post-translational modification Phosphoserine. K307 is covalently cross-linked (Glycyl lysine isopeptide (Lys-Gly) (interchain with G-Cter in URM1)). Positions 314 and 318 each coordinate NAD(+).

The protein belongs to the glyceraldehyde-3-phosphate dehydrogenase family. Homotetramer. In terms of processing, conjugated to URM1, a ubiquitin-like protein, in response to oxidative stresses. The attachment of URM1 to lysine residues exclusively depends on the presence of a peroxidatic cysteine in the target protein, with low specificity for the particular residue, motif, or structural context at which urmylation can occur. The URM1-conjugation reaction is mechanistically and directly coupled to the process of cysteine persulfidation, transfering the sulfur atom of the URM1 thiocarboxyl group to redox-active cysteine residues in the target protein if it is exposed to oxidative conditions. Post-translationally, persulfidated on specific redox-active cysteine residues. Persulfidation (also called protein S-sulfhydration) may provide a molecular mechanism that enables cells to protect vulnerable cysteine residues from reactive oxygen species (ROS) under stress conditions.

Its subcellular location is the cytoplasm. The protein localises to the mitochondrion. It carries out the reaction D-glyceraldehyde 3-phosphate + phosphate + NAD(+) = (2R)-3-phospho-glyceroyl phosphate + NADH + H(+). It catalyses the reaction NADH + H2O = (6R)-NADHX. The catalysed reaction is NADH + H2O = (6S)-NADHX. The enzyme catalyses NADPH + H2O = (6R)-NADPHX. It carries out the reaction NADPH + H2O = (6S)-NADPHX. Its pathway is carbohydrate degradation; glycolysis; pyruvate from D-glyceraldehyde 3-phosphate: step 1/5. Functionally, glyceraldehyde-3-phosphate dehydrogenase (GAPDH) involved in glycolysis and gluconeogenesis. Catalyzes the reaction of glyceraldehyde-3-phosphate to 1,3 bis-phosphoglycerate. The contribution of the TDH1, TDH2, and TDH3 to the total glyceraldehyde-3-phosphate dehydrogenase activity is 10-15, 25-30, and 50-60%, respectively. As a side activity, catalyzes the hydration of the nicotinamide ring of NADH or NADPH at the C6 position to give the corresponding hydrates, NADHX and NADPHX, which exist as R and S epimers, that cannot act as electron donors or acceptors and inhibit several dehydrogenases, making them toxic. The sequence is that of Glyceraldehyde-3-phosphate dehydrogenase 3 from Saccharomyces cerevisiae (strain ATCC 204508 / S288c) (Baker's yeast).